Consider the following 249-residue polypeptide: 5'-nucleotidase SurE (249 aa).

4 residues coordinate a divalent metal cation: Asp-9, Asp-10, Ser-40, and Asn-92.

Belongs to the SurE nucleotidase family. The cofactor is a divalent metal cation.

The protein localises to the cytoplasm. It carries out the reaction a ribonucleoside 5'-phosphate + H2O = a ribonucleoside + phosphate. Its function is as follows. Nucleotidase that shows phosphatase activity on nucleoside 5'-monophosphates. The protein is 5'-nucleotidase SurE of Shewanella loihica (strain ATCC BAA-1088 / PV-4).